Reading from the N-terminus, the 955-residue chain is UPF0182 protein PMT_0755 (955 aa).

9 helical membrane passes run Leu-25–Phe-45, Trp-58–Trp-78, Leu-107–Leu-127, Ile-146–Asn-166, Cys-178–Ile-198, Phe-214–Ile-234, Cys-264–Leu-284, Ser-313–Gln-333, and Leu-340–Val-360.

It belongs to the UPF0182 family.

It localises to the cell membrane. The protein is UPF0182 protein PMT_0755 of Prochlorococcus marinus (strain MIT 9313).